Reading from the N-terminus, the 166-residue chain is NADPH-dependent 7-cyano-7-deazaguanine reductase (166 aa).

The active-site Thioimide intermediate is Cys57. The active-site Proton donor is Asp64. Substrate is bound by residues Val79 to Ser81 and His98 to Glu99.

This sequence belongs to the GTP cyclohydrolase I family. QueF type 1 subfamily.

Its subcellular location is the cytoplasm. It catalyses the reaction 7-aminomethyl-7-carbaguanine + 2 NADP(+) = 7-cyano-7-deazaguanine + 2 NADPH + 3 H(+). It participates in tRNA modification; tRNA-queuosine biosynthesis. In terms of biological role, catalyzes the NADPH-dependent reduction of 7-cyano-7-deazaguanine (preQ0) to 7-aminomethyl-7-deazaguanine (preQ1). The polypeptide is NADPH-dependent 7-cyano-7-deazaguanine reductase (Staphylococcus aureus (strain MRSA252)).